The sequence spans 96 residues: Co-chaperonin GroES (96 aa).

Belongs to the GroES chaperonin family. Heptamer of 7 subunits arranged in a ring. Interacts with the chaperonin GroEL.

The protein localises to the cytoplasm. Its function is as follows. Together with the chaperonin GroEL, plays an essential role in assisting protein folding. The GroEL-GroES system forms a nano-cage that allows encapsulation of the non-native substrate proteins and provides a physical environment optimized to promote and accelerate protein folding. GroES binds to the apical surface of the GroEL ring, thereby capping the opening of the GroEL channel. The polypeptide is Co-chaperonin GroES (Polynucleobacter necessarius subsp. necessarius (strain STIR1)).